Consider the following 196-residue polypeptide: dTTP/UTP pyrophosphatase (196 aa).

The active-site Proton acceptor is Asp72.

Belongs to the Maf family. YhdE subfamily. A divalent metal cation is required as a cofactor.

The protein localises to the cytoplasm. The catalysed reaction is dTTP + H2O = dTMP + diphosphate + H(+). The enzyme catalyses UTP + H2O = UMP + diphosphate + H(+). In terms of biological role, nucleoside triphosphate pyrophosphatase that hydrolyzes dTTP and UTP. May have a dual role in cell division arrest and in preventing the incorporation of modified nucleotides into cellular nucleic acids. The chain is dTTP/UTP pyrophosphatase from Chlamydia trachomatis serovar A (strain ATCC VR-571B / DSM 19440 / HAR-13).